We begin with the raw amino-acid sequence, 848 residues long: Protein MEI2-like 2 (848 aa).

RRM domains are found at residues 197 to 270 and 282 to 355; these read RTLF…FSIP and GTLV…PSRP. 3 disordered regions span residues 370-400, 455-523, and 826-848; these read IDQDEPRSYRIPHVGSPIASSPPGAWAQYSS, NQPH…SQGQ, and ATGDPFGNEEDNNQNERTAGEEL.

Probable RNA-binding protein that may play a role in growth regulation. The protein is Protein MEI2-like 2 (ML2) of Oryza sativa subsp. japonica (Rice).